The chain runs to 907 residues: Envelope glycoprotein B (907 aa).

The signal sequence occupies residues 1–22 (MESRIWCLVVCVNLCIVCLGAA). The Virion surface segment spans residues 23–751 (VSSSSTRGTS…EGVATFLKNP (729 aa)). Residues 29 to 62 (RGTSATHSHHSSHTTSAAHSRSGSVSQRVTSSQT) are disordered. Low complexity predominate over residues 41–62 (HTTSAAHSRSGSVSQRVTSSQT). Residues asparagine 68, asparagine 73, and asparagine 85 are each glycosylated (N-linked (GlcNAc...) asparagine; by host). Cystine bridges form between cysteine 94/cysteine 551, cysteine 111/cysteine 507, cysteine 185/cysteine 250, and cysteine 344/cysteine 391. Residues 152–158 (SYAYIHT) are involved in fusion and/or binding to host membrane. An N-linked (GlcNAc...) asparagine; by host glycan is attached at asparagine 208. The segment at 237-244 (GSTWLYRE) is involved in fusion and/or binding to host membrane. N-linked (GlcNAc...) asparagine; by host glycosylation is found at asparagine 281, asparagine 286, asparagine 302, asparagine 341, asparagine 383, asparagine 405, asparagine 409, asparagine 417, asparagine 447, asparagine 452, asparagine 456, asparagine 466, asparagine 555, and asparagine 586. Cysteine 574 and cysteine 611 are disulfide-bonded. Hydrophobic membrane proximal region stretches follow at residues 697-749 (VEDK…TFLK) and 708-748 (YLKG…ATFL). Residues 752–772 (FGAFTIILVAIAVVIIIYLIY) form a helical membrane-spanning segment. The Intravirion portion of the chain corresponds to 773–907 (TRQRRLCMQP…LKDSDEEENV (135 aa)). Polar residues-rich tracts occupy residues 798–810 (VTSG…SLQA) and 860–877 (RAQQ…GTQD). 2 disordered regions span residues 798–838 (VTSG…TAAP) and 860–907 (RAQQ…EENV). Positions 878 to 887 (KGQKPNLLDR) are enriched in basic and acidic residues. The short motif at 895–898 (YRHL) is the Internalization motif element.

It belongs to the herpesviridae glycoprotein B family. In terms of assembly, homotrimer; disulfide-linked. Binds to heparan sulfate proteoglycans. Interacts with gH/gL heterodimer. Interacts with host C-type lectin CD209/DC-SIGN. Interacts with host ITGB1, EGFR, and PDGFRA. In terms of processing, a proteolytic cleavage by host furin generates two subunits that remain linked by disulfide bonds.

It localises to the virion membrane. It is found in the host cell membrane. Its subcellular location is the host endosome membrane. The protein localises to the host Golgi apparatus membrane. In terms of biological role, envelope glycoprotein that plays a role in host cell entry, cell to-cell virus transmission, and fusion of infected cells. May be involved in the initial attachment via binding to heparan sulfate together with the gM/gN complex that binds heparin with higher affinity. Interacts with host integrin ITGB1, PDGFRA and EGFR that likely serve as postattachment entry receptors. Also participates in the fusion of viral and cellular membranes leading to virus entry into the host cell. Membrane fusion is mediated by the fusion machinery composed at least of gB and the heterodimer gH/gL. The protein is Envelope glycoprotein B of Homo sapiens (Human).